A 221-amino-acid polypeptide reads, in one-letter code: MVSFSKNKILSAAVFASVLLLDNNNSEFNNNLFSKNAKGLNSNKRLLHESQAHAGDAHHAHHVADAHHAHHAANAHHAANAHHAANAHHAANAHHAANAHHAANAHHAANAHHAANAHHAANAHHAANAHHAANAHHAANAHHAADANHGFHFNLHDNNSHTLHHAKANACFDDSHHDDAHHDGAHHDDAHHDGAHHDGAHHDGAHHDGAHHNATTHHLHH.

An N-terminal signal peptide occupies residues 1 to 21; that stretch reads MVSFSKNKILSAAVFASVLLL. A compositionally biased stretch (basic and acidic residues) spans 52 to 67; it reads AHAGDAHHAHHVADAH. 2 disordered regions span residues 52–141 and 180–221; these read AHAG…AANA and AHHD…HLHH. A run of 2 repeats spans residues 57-59 and 60-62. The 4 X 3 AA approximate tandem repeats of A-H-H stretch occupies residues 57–68; that stretch reads AHHAHHVADAHH. Residues 63-65 form a 1-3; approximate repeat; sequence VAD. Tandem repeats lie at residues 66 to 68, 69 to 74, 75 to 80, 81 to 86, 87 to 92, 93 to 98, 99 to 104, 105 to 110, 111 to 116, 117 to 122, 123 to 128, 129 to 134, and 135 to 140. Residues 69-146 are 13 X 6 AA approximate tandem repeats of A-H-H-A-A-N; that stretch reads AHHAANAHHA…HAANAHHAAD (78 aa). Residues 75–141 show a composition bias toward low complexity; it reads AHHAANAHHA…AANAHHAANA (67 aa). Residues 141–146 form a 2-13; approximate repeat; it reads AHHAAD. Tandem repeats lie at residues 176 to 180, 181 to 185, 186 to 190, 191 to 195, 196 to 200, 201 to 205, and 206 to 210. Positions 176–210 are 7 X 5 AA tandem repeats of H-H-D-[DG]-A; sequence HHDDAHHDGAHHDDAHHDGAHHDGAHHDGAHHDGA. Residues 180-211 show a composition bias toward basic and acidic residues; sequence AHHDGAHHDDAHHDGAHHDGAHHDGAHHDGAH.

This Plasmodium falciparum (isolate FC27 / Papua New Guinea) protein is Small histidine-alanine-rich protein.